Here is a 138-residue protein sequence, read N- to C-terminus: Mitochondrial import inner membrane translocase subunit tim-16 (138 aa).

Residues 32-43 are compositionally biased toward low complexity; it reads TQQAAARHAAAT. Disordered regions lie at residues 32 to 58 and 118 to 138; these read TQQAAARHAAATGQSPSETKENANANA and LSRLEQKSEENKEQQKENSKE. Residues 44–56 show a composition bias toward polar residues; it reads GQSPSETKENANA. Residues 66-119 form a J-like region; the sequence is ESLQILNVKTPLNREDVEKHYEHLFAINDKAKGGTFYLQSKVYRAKERIDEELS.

It belongs to the TIM16/PAM16 family. Probable component of the PAM complex at least composed of a mitochondrial HSP70 protein, GrpE, tim-44, tim-16 and tim-14. Associates with the TIM23 complex.

The protein localises to the mitochondrion inner membrane. In terms of biological role, regulates ATP-dependent protein translocation into the mitochondrial matrix. This Caenorhabditis briggsae protein is Mitochondrial import inner membrane translocase subunit tim-16.